The chain runs to 241 residues: Uridylate kinase (241 aa).

12 to 15 provides a ligand contact to ATP; it reads KISG. Residues 20–25 form an involved in allosteric activation by GTP region; the sequence is GDKGNG. Gly54 lines the UMP pocket. The ATP site is built by Gly55 and Arg59. Residues Asp74 and 135-142 contribute to the UMP site; that span reads TGNPYFST. Residues Asn163, Tyr169, and Asp172 each contribute to the ATP site.

Belongs to the UMP kinase family. In terms of assembly, homohexamer.

The protein localises to the cytoplasm. It carries out the reaction UMP + ATP = UDP + ADP. Its pathway is pyrimidine metabolism; CTP biosynthesis via de novo pathway; UDP from UMP (UMPK route): step 1/1. Allosterically activated by GTP. Inhibited by UTP. Functionally, catalyzes the reversible phosphorylation of UMP to UDP. The sequence is that of Uridylate kinase from Lactobacillus acidophilus (strain ATCC 700396 / NCK56 / N2 / NCFM).